Reading from the N-terminus, the 431-residue chain is Histidinol dehydrogenase (431 aa).

NAD(+) contacts are provided by tyrosine 127, glutamine 189, and asparagine 212. The substrate site is built by serine 237, glutamine 259, and histidine 262. Zn(2+) is bound by residues glutamine 259 and histidine 262. Catalysis depends on proton acceptor residues glutamate 326 and histidine 327. Substrate-binding residues include histidine 327, aspartate 360, glutamate 414, and histidine 419. Aspartate 360 contacts Zn(2+). Position 419 (histidine 419) interacts with Zn(2+).

The protein belongs to the histidinol dehydrogenase family. Requires Zn(2+) as cofactor.

It carries out the reaction L-histidinol + 2 NAD(+) + H2O = L-histidine + 2 NADH + 3 H(+). Its pathway is amino-acid biosynthesis; L-histidine biosynthesis; L-histidine from 5-phospho-alpha-D-ribose 1-diphosphate: step 9/9. In terms of biological role, catalyzes the sequential NAD-dependent oxidations of L-histidinol to L-histidinaldehyde and then to L-histidine. The protein is Histidinol dehydrogenase of Xanthomonas axonopodis pv. citri (strain 306).